Reading from the N-terminus, the 390-residue chain is Putative gustatory receptor 36c (390 aa).

At 1–4 (MDLE) the chain is on the cytoplasmic side. A helical membrane pass occupies residues 5 to 25 (SFLLGAVYYYGLFIGLSNFEF). At 26–36 (DWNTGRVFTKK) the chain is on the extracellular side. The chain crosses the membrane as a helical span at residues 37-57 (WSTLYAIALDSCIFALYIYHW). At 58–75 (TGNTNIVNAIFGRANMLH) the chain is on the cytoplasmic side. Residues 76 to 96 (EYVVAILTGLRIVTGLFTLIL) form a helical membrane-spanning segment. At 97 to 132 (RWYQRCKMMDLASKVVRMYVARPQVRRMSRWGILTK) the chain is on the extracellular side. A helical membrane pass occupies residues 133-153 (FIFGSITDGLQMAMVLSAMGS). Residues 154–165 (VDSQFYLGLGLQ) are Cytoplasmic-facing. A helical transmembrane segment spans residues 166–186 (YWMFVILNMAMMQQHMIMLFV). The Extracellular portion of the chain corresponds to 187-254 (RTQFQLINTE…MEEVFGIQGA (68 aa)). The chain crosses the membrane as a helical span at residues 255–275 (MTYGGYYLSSVGTCYLAYSIL). Residues 276-288 (KHGYENLSMTLST) lie on the Cytoplasmic side of the membrane. The chain crosses the membrane as a helical span at residues 289 to 309 (VILAYSWCFFYYLDGMLNLSV). The Extracellular segment spans residues 310–390 (MLHVQDDYWE…FLIQYDIEHF (81 aa)).

It belongs to the insect chemoreceptor superfamily. Gustatory receptor (GR) family. Gr22e subfamily. In terms of tissue distribution, expressed in neurons of the terminal external chemosensory organ of larvae.

It is found in the cell membrane. Its function is as follows. Probable gustatory receptor which mediates acceptance or avoidance behavior, depending on its substrates. In Drosophila melanogaster (Fruit fly), this protein is Putative gustatory receptor 36c (Gr36c).